A 1359-amino-acid chain; its full sequence is ABC transporter C family member 1 (1359 aa).

One can recognise an ABC transmembrane type-1 1 domain in the interval 111-394; sequence NKLTIFLQIL…LPNSIQQLQS (284 aa). 6 helical membrane-spanning segments follow: residues 119–139, 147–167, 214–234, 244–264, 332–352, and 363–383; these read ILTN…IQFI, SFLA…SYTF, LLSV…MGIF, LALL…IMVI, MIFW…VLVL, and ITLE…IPLL. Residues 409 to 478 form a disordered region; it reads PEIQQNHSSN…QQQQQQQQQQ (70 aa). A compositionally biased stretch (acidic residues) spans 420–433; sequence EEEEEDEYDDDINS. Positions 440-450 are enriched in polar residues; it reads HNGSFNWNQVD. Residues 459–478 show a composition bias toward low complexity; that stretch reads GNQQQQQQQQQQQQQQQQQQ. The ABC transporter 1 domain maps to 470–690; that stretch reads QQQQQQQQQQ…IDFESIMKTK (221 aa). 502 to 509 lines the ATP pocket; that stretch reads GVVGSGKT. The 299-residue stretch at 763-1061 folds into the ABC transmembrane type-1 2 domain; the sequence is LRVYKEYFKH…LEVKMNSVER (299 aa). 5 helical membrane passes run 773–793, 819–839, 884–904, 906–926, and 999–1021; these read GSSI…QIIY, IYLL…FMMA, VDLL…TVLV, IGIM…LIGI, and WVAV…FSLF. Residues 1073–1102 adopt a coiled-coil conformation; that stretch reads NSKINFFRNEQQEEEEEEEEEFDFDNDDYD. Residues 1116 to 1350 form the ABC transporter 2 domain; sequence IEFRNVEIKY…QESRFSKLVK (235 aa). 1150-1157 contacts ATP; sequence GRTGAGKS.

It belongs to the ABC transporter superfamily. ABCC family. Conjugate transporter (TC 3.A.1.208) subfamily.

The protein resides in the membrane. In Dictyostelium discoideum (Social amoeba), this protein is ABC transporter C family member 1 (abcC1).